Reading from the N-terminus, the 141-residue chain is MAKYIAQIIVLGAQAVGRAFTKALRQEIAASQEAARRAGGGKQGDKSAESNLRTGMTLEEAKQILNIDDPKNVDAITKNYEHLFQVNERSKGGSFYIQSKVFRAKERLDHEIKAHEQPRSSNTEAAQDTAEESQSRSRQRR.

2 disordered regions span residues 34–53 (AARR…SNLR) and 108–141 (LDHE…RQRR). A J-like region spans residues 60 to 113 (EAKQILNIDDPKNVDAITKNYEHLFQVNERSKGGSFYIQSKVFRAKERLDHEIK). Residues 108–118 (LDHEIKAHEQP) show a composition bias toward basic and acidic residues.

It belongs to the TIM16/PAM16 family. As to quaternary structure, probable component of the PAM complex at least composed of a mitochondrial HSP70 protein, Roe1, TIM44, blp/TIM16 and TIM14. Associates with the TIM23 complex. In terms of tissue distribution, expressed in distinct cells in the embryonic and larval nervous system.

It localises to the mitochondrion inner membrane. In terms of biological role, regulates ATP-dependent protein translocation into the mitochondrial matrix. Essential for larval development. The polypeptide is Mitochondrial import inner membrane translocase subunit Tim16 (blp) (Drosophila melanogaster (Fruit fly)).